The following is a 542-amino-acid chain: Neurofilament light polypeptide (542 aa).

An N-acetylserine modification is found at S2. The tract at residues S2–Q93 is head. The O-linked (GlcNAc) threonine glycan is linked to T21. The residue at position 23 (R23) is an Asymmetric dimethylarginine; alternate. An Omega-N-methylarginine; alternate modification is found at R23. A glycan (O-linked (GlcNAc) serine) is linked at S27. R30 carries the post-translational modification Omega-N-methylarginine. Position 43 is a phosphotyrosine (Y43). 3 positions are modified to phosphoserine: S56, S67, and S103. The IF rod domain maps to E90–L401. Residues L94–L125 are coil 1A. Residues R126 to L138 form a linker 1 region. The tract at residues Y139–L234 is coil 1B. The linker 12 stretch occupies residues Q235–P253. The coil 2A stretch occupies residues D254–K272. The segment at N273–F281 is linker 2. Residues K282 to E397 are coil 2B. An epitope; recognized by IF-specific monoclonal antibody region spans residues A382–K392. Residues E398–Y444 form a tail, subdomain A region. The tract at residues E398–D542 is tail. The tract at residues T445–D542 is tail, subdomain B (acidic). Positions E451–D542 are disordered. The residue at position 453 (S453) is a Phosphoserine. The span at E460–P471 shows a compositional bias: basic and acidic residues. A compositionally biased stretch (acidic residues) spans P472 to K527. 2 positions are modified to phosphoserine: S473 and S503. The residue at position 519 (T519) is a Phosphothreonine. Phosphoserine occurs at positions 522 and 531. The span at K528–D542 shows a compositional bias: basic and acidic residues.

Belongs to the intermediate filament family. Forms homodimers (in vitro). Forms heterodimers with NEFH or NEFM; which can further hetero-oligomerize (in vitro). Forms heterodimers with INA (in vitro). Interacts with ARHGEF28. Interacts with TRIM2. Post-translationally, O-glycosylated; contains three N-acetylglucosamine side chains. In terms of processing, phosphorylated in the head and rod regions by the PKC kinase PKN1, leading to the inhibition of polymerization. Ubiquitinated in the presence of TRIM2 and UBE2D1. In terms of tissue distribution, expressed in the dorsal root ganglion neurons (at protein level).

It localises to the cell projection. Its subcellular location is the axon. It is found in the cytoplasm. The protein resides in the cytoskeleton. In terms of biological role, neurofilaments usually contain three intermediate filament proteins: NEFL, NEFM, and NEFH which are involved in the maintenance of neuronal caliber. May additionally cooperate with the neuronal intermediate filament proteins PRPH and INA to form neuronal filamentous networks. The protein is Neurofilament light polypeptide (Nefl) of Rattus norvegicus (Rat).